A 181-amino-acid chain; its full sequence is Adenylyl-sulfate kinase (181 aa).

12–19 (GLSGAGKS) is a binding site for ATP. The active-site Phosphoserine intermediate is Ser-86.

Belongs to the APS kinase family.

The enzyme catalyses adenosine 5'-phosphosulfate + ATP = 3'-phosphoadenylyl sulfate + ADP + H(+). The protein operates within sulfur metabolism; hydrogen sulfide biosynthesis; sulfite from sulfate: step 2/3. Catalyzes the synthesis of activated sulfate. The polypeptide is Adenylyl-sulfate kinase (Microcystis aeruginosa (strain NIES-843 / IAM M-2473)).